The chain runs to 676 residues: Envelope glycoprotein (676 aa).

The N-terminal stretch at 1 to 32 (MGVTGILQLPRDRFKRTSFFLWVIILFQRTFS) is a signal peptide. At 33–650 (IPLGVIHNST…NDNWWTGWRQ (618 aa)) the chain is on the extracellular side. A glycan (N-linked (GlcNAc...) asparagine; by host) is linked at Asn-40. 5 disulfide bridges follow: Cys-53–Cys-609, Cys-108–Cys-135, Cys-121–Cys-147, Cys-511–Cys-556, and Cys-601–Cys-608. Positions 54–201 (RDKLSSTNQL…DFFSSHPLRE (148 aa)) are receptor-binding. Asn-204, Asn-228, Asn-238, Asn-257, Asn-268, Asn-296, Asn-317, Asn-333, Asn-346, Asn-386, and Asn-413 each carry an N-linked (GlcNAc...) asparagine; by host glycan. The mucin-like region stretch occupies residues 305–485 (ELSFTAVSNR…SGKLGLITNT (181 aa)). Polar residues predominate over residues 314-335 (RAKNISGQSPARTSSDPGTNTT). The disordered stretch occupies residues 314-337 (RAKNISGQSPARTSSDPGTNTTTE). Positions 370–478 (TISTSPQPPT…TGEESASSGK (109 aa)) are disordered. Residues 414-427 (DSTASDTPPATTAA) show a composition bias toward low complexity. 3 N-linked (GlcNAc...) asparagine; by host glycosylation sites follow: Asn-436, Asn-454, and Asn-462. Positions 447–464 (ATTTSPQNHSETAGNNNT) are enriched in polar residues. A fusion peptide region spans residues 524–539 (GAAIGLAWIPYFGPAA). Residues 554-595 (LICGLRQLANETTQALQLFLRATTELRTFSILNRKAIDFLLQ) are a coiled coil. The N-linked (GlcNAc...) asparagine; by host glycan is linked to Asn-563. Positions 615–634 (WTKNITDKIDQIIHDFVDKT) form a coiled coil. N-linked (GlcNAc...) asparagine; by host glycosylation is present at Asn-618. The helical transmembrane segment at 651-671 (WIPAGIGVTGVIIAVIALFCI) threads the bilayer. Residues Cys-670 and Cys-672 are each lipidated (S-palmitoyl cysteine; by host). The Cytoplasmic portion of the chain corresponds to 672 to 676 (CKFVF).

It belongs to the filoviruses glycoprotein family. Homotrimer; each monomer consists of a GP1 and a GP2 subunit linked by disulfide bonds. The resulting peplomers (GP1,2) protrude from the virus surface as spikes. Interacts with host integrin alpha-V/ITGAV. Interacts with host CLEC10A. Binds also to host CD209 and CLEC4M/DC-SIGN(R). Interacts with host FOLR1. Interacts with BST2; this interaction inhibits the antiviral effect of BST2 and this allows viral release from infected cells. Interacts with host FCN1; this interaction enhances viral entry. Interacts with host TLR4; this interaction induces cell death in T-lymphocytes or proinflammatory cytokines and SOCS1 production in monocytes. As to quaternary structure, interacts with host entry receptor NPC1. In terms of assembly, GP1 and GP2delta are part of GP1,2delta soluble complexes released by ectodomain shedding. Post-translationally, the signal peptide region modulates GP's high mannose glycosylation, thereby determining the efficiency of the interactions with DC-SIGN(R). In terms of processing, N-glycosylated. O-glycosylated in the mucin-like region. Post-translationally, palmitoylation of GP2 is not required for its function. In terms of processing, specific enzymatic cleavages in vivo yield mature proteins. The precursor is processed into GP1 and GP2 by host cell furin in the trans Golgi, and maybe by other host proteases, to yield the mature GP1 and GP2 proteins. The cleavage site corresponds to the furin optimal cleavage sequence [KR]-X-[KR]-R. This cleavage does not seem to be required for function. After the internalization of the virus into cell endosomes, GP1 C-terminus is removed by the endosomal proteases cathepsin B, cathepsin L, or both, leaving a 19-kDa N-terminal fragment which is further digested by cathepsin B. Proteolytic processing of GP1,2 by host ADAM17 can remove the transmembrane anchor of GP2 and leads to shedding of complexes consisting in GP1 and truncated GP2 (GP1,2delta).

The protein resides in the virion membrane. The protein localises to the host cell membrane. It localises to the secreted. Trimeric GP1,2 complexes form the virion surface spikes and mediate the viral entry processes, with GP1 acting as the receptor-binding subunit and GP2 as the membrane fusion subunit. At later times of infection, down-regulates the expression of various host cell surface molecules that are essential for immune surveillance and cell adhesion. Down-modulates several integrins including ITGA1, ITGA2, ITGA3, ITGA4, ITGA5, ITGA6, ITGAV and ITGB1. This decrease in cell adhesion molecules may lead to cell detachment, contributing to the disruption of blood vessel integrity and hemorrhages developed during infection (cytotoxicity). Interacts with host TLR4 and thereby stimulates the differentiation and activation of monocytes leading to bystander death of T-lymphocytes. Down-regulates as well the function of host natural killer cells. Counteracts the antiviral effect of host BST2/tetherin that restricts release of progeny virions from infected cells. However, cooperates with VP40 and host BST2 to activate canonical NF-kappa-B pathway in a manner dependent on neddylation. In terms of biological role, functions as a decoy for anti-GP1,2 antibodies thereby contributing to viral immune evasion. Interacts and activates host macrophages and dendritic cells inducing up-regulation of cytokine transcription. This effect is mediated throught activation of host TLR4. Its function is as follows. Responsible for binding to the receptor(s) on target cells. Interacts with CD209/DC-SIGN and CLEC4M/DC-SIGNR which act as cofactors for virus entry into dendritic cells (DCs) and endothelial cells. Binding to the macrophage specific lectin CLEC10A also seems to enhance virus infectivity. Interaction with FOLR1/folate receptor alpha may be a cofactor for virus entry in some cell types, although results are contradictory. Members of the Tyro3 receptor tyrosine kinase family also seem to be cell entry factors in filovirus infection. Once attached, the virions are internalized through clathrin-dependent endocytosis and/or macropinocytosis. After internalization of the virus into the endosomes of the host cell, proteolysis of GP1 by two cysteine proteases, CTSB/cathepsin B and CTSL/cathepsin L removes the glycan cap and allows GP1 binding to the host entry receptor NPC1. NPC1-binding, Ca(2+) and acidic pH induce a conformational change of GP2, which unmasks its fusion peptide and permit membranes fusion. Functionally, acts as a class I viral fusion protein. Under the current model, the protein has at least 3 conformational states: pre-fusion native state, pre-hairpin intermediate state, and post-fusion hairpin state. During viral and target cell membrane fusion, the coiled coil regions (heptad repeats) assume a trimer-of-hairpins structure, positioning the fusion peptide in close proximity to the C-terminal region of the ectodomain. The formation of this structure appears to drive apposition and subsequent fusion of viral and target cell membranes. Responsible for penetration of the virus into the cell cytoplasm by mediating the fusion of the membrane of the endocytosed virus particle with the endosomal membrane. Low pH in endosomes induces an irreversible conformational change in GP2, releasing the fusion hydrophobic peptide. The sequence is that of Envelope glycoprotein (GP) from Zaire ebolavirus (strain Kikwit-95) (ZEBOV).